The chain runs to 887 residues: Chaperone protein ClpB 2 (887 aa).

Positions 6 to 147 (PTKFTDKAWE…AATVKAIRGA (142 aa)) constitute a Clp R domain. Repeat regions lie at residues 9 to 73 (FTDK…ARQQ) and 84 to 147 (CGRS…IRGA). The tract at residues 160-342 (AALEKYGRDL…RRFQQVYIGQ (183 aa)) is NBD1. Residue 207–214 (GEPGVGKT) participates in ATP binding. Residues 343–559 (PSVEDTISIL…IAEIVAKWTG (217 aa)) are linker. A coiled-coil region spans residues 393 to 535 (IDLVDEAAAK…TEAQLLELQA (143 aa)). Residues 569–780 (ERQKLLQLEQ…RIDDVILFHG (212 aa)) are NBD2. 619–626 (GPTGVGKT) is an ATP binding site. Residues 781–887 (LGRTELAQIA…TGDRDTVSAS (107 aa)) form a C-terminal region.

The protein belongs to the ClpA/ClpB family. Homohexamer. The oligomerization is ATP-dependent.

It is found in the cytoplasm. In terms of biological role, part of a stress-induced multi-chaperone system, it is involved in the recovery of the cell from heat-induced damage, in cooperation with DnaK, DnaJ and GrpE. Acts before DnaK, in the processing of protein aggregates. Protein binding stimulates the ATPase activity; ATP hydrolysis unfolds the denatured protein aggregates, which probably helps expose new hydrophobic binding sites on the surface of ClpB-bound aggregates, contributing to the solubilization and refolding of denatured protein aggregates by DnaK. The sequence is that of Chaperone protein ClpB 2 (clpB2) from Thermosynechococcus vestitus (strain NIES-2133 / IAM M-273 / BP-1).